Reading from the N-terminus, the 564-residue chain is Septation ring formation regulator EzrA (564 aa).

Residues 1 to 4 (MVLF) lie on the Extracellular side of the membrane. The chain crosses the membrane as a helical span at residues 5–23 (IILAILVVILIAIGVLFYM). Residues 24 to 564 (RSNKRNLIEK…KHIEEQVIKE (541 aa)) lie on the Cytoplasmic side of the membrane. 4 coiled-coil regions span residues 84 to 126 (VEEK…HQVT), 165 to 223 (EAAE…LIRE), 271 to 303 (MISR…YEVK), and 350 to 435 (VRQF…RRLL).

This sequence belongs to the EzrA family.

Its subcellular location is the cell membrane. Functionally, negative regulator of FtsZ ring formation; modulates the frequency and position of FtsZ ring formation. Inhibits FtsZ ring formation at polar sites. Interacts either with FtsZ or with one of its binding partners to promote depolymerization. The chain is Septation ring formation regulator EzrA from Staphylococcus epidermidis (strain ATCC 12228 / FDA PCI 1200).